We begin with the raw amino-acid sequence, 76 residues long: ATP synthase subunit 9, mitochondrial (76 aa).

Residue methionine 1 is modified to N-formylmethionine. A run of 2 helical transmembrane segments spans residues 14–34 (ISTI…AALI) and 52–72 (ILGF…SFLL).

This sequence belongs to the ATPase C chain family. As to quaternary structure, F-type ATPases have 2 components, CF(1) - the catalytic core - and CF(0) - the membrane proton channel. In yeast, the dimeric form of ATP synthase consists of 18 polypeptides: alpha, beta, gamma, delta, epsilon, 4 (B), 5 (OSCP), 6 (A), 8, 9 (C), d, E (Tim11), f, g, h, i, j and k.

The protein resides in the mitochondrion membrane. Mitochondrial membrane ATP synthase (F(1)F(0) ATP synthase or Complex V) produces ATP from ADP in the presence of a proton gradient across the membrane which is generated by electron transport complexes of the respiratory chain. F-type ATPases consist of two structural domains, F(1) - containing the extramembraneous catalytic core and F(0) - containing the membrane proton channel, linked together by a central stalk and a peripheral stalk. During catalysis, ATP synthesis in the catalytic domain of F(1) is coupled via a rotary mechanism of the central stalk subunits to proton translocation. Part of the complex F(0) domain. A homomeric c-ring of probably 10 subunits is part of the complex rotary element. The sequence is that of ATP synthase subunit 9, mitochondrial (ATP9) from Saccharomyces paradoxus (Yeast).